Here is an 85-residue protein sequence, read N- to C-terminus: Large ribosomal subunit protein eL43 (85 aa).

Zn(2+) is bound by residues Cys32, Cys35, Cys50, and Cys53. The C4-type zinc finger occupies 32–53; it reads CTFCGKTKMKRRAVGIWHCGSC.

The protein belongs to the eukaryotic ribosomal protein eL43 family. As to quaternary structure, component of the large ribosomal subunit.

The protein resides in the cytoplasm. Functionally, component of the large ribosomal subunit. The ribosome is a large ribonucleoprotein complex responsible for the synthesis of proteins in the cell. The sequence is that of Large ribosomal subunit protein eL43 (rpl37a) from Myxine glutinosa (Atlantic hagfish).